A 208-amino-acid polypeptide reads, in one-letter code: Thymidylate kinase (208 aa).

Position 10–17 (10–17 (GPEGSGKT)) interacts with ATP.

This sequence belongs to the thymidylate kinase family.

The catalysed reaction is dTMP + ATP = dTDP + ADP. Phosphorylation of dTMP to form dTDP in both de novo and salvage pathways of dTTP synthesis. In Bacillus cereus (strain B4264), this protein is Thymidylate kinase.